The primary structure comprises 379 residues: Sterol 24-C-methyltransferase erg-4 (379 aa).

This sequence belongs to the class I-like SAM-binding methyltransferase superfamily. Erg6/SMT family.

It carries out the reaction lanosterol + S-adenosyl-L-methionine = eburicol + S-adenosyl-L-homocysteine + H(+). It functions in the pathway steroid metabolism; ergosterol biosynthesis. In terms of biological role, catalyzes the methyl transfer from S-adenosyl-methionine to the C-24 of lanosterol to form eburicol. The protein is Sterol 24-C-methyltransferase erg-4 of Neurospora crassa (strain ATCC 24698 / 74-OR23-1A / CBS 708.71 / DSM 1257 / FGSC 987).